The chain runs to 518 residues: Protein CYCLOPS (518 aa).

The disordered stretch occupies residues 401 to 451; the sequence is DKKRKSLERYGSITSAVSDDKGDTTKKRRVERSRKMAEAKERNSTPSVPSD. 2 consecutive short sequence motifs (nuclear localization signal) follow at residues 402–405 and 426–429; these read KKRK and KKRR. The span at 433 to 443 shows a compositional bias: basic and acidic residues; the sequence is SRKMAEAKERN. Residues 452-518 are a coiled coil; sequence MQAVLKRCEN…ERILSETEKM (67 aa).

It belongs to the CYCLOPS family. As to quaternary structure, forms homodimers. Interacts with CCAMK. Post-translationally, phosphorylated at the N-terminus by CCAMK. In terms of tissue distribution, expressed in roots.

It is found in the nucleus. Involved in symbiotic signaling. Required for root infection by symbiotic rhizobia, infection thread (IT) formation, and nodule development. Probably not involved in nodule organogenesis. Involved in arbuscular mycorrhizal (AM) symbiosis. Required for fungal infection of the outer cortical cell layers, and for arbuscule development during the AM symbiosis, by binding, as a complex comprising CCaMK, CYCLOPS, and DELLA, to RAM1 promoter cis element thus promoting its expression. Acts downstream of CCAMK. Binds to the promoter of ERN1 and strongly transactivates ERN1, a transcriptional regulator required for nodulation. The protein is Protein CYCLOPS of Lotus japonicus (Lotus corniculatus var. japonicus).